The chain runs to 348 residues: Anthranilate phosphoribosyltransferase (348 aa).

5-phospho-alpha-D-ribose 1-diphosphate contacts are provided by residues Gly-84, 87–88 (GD), Thr-92, 94–97 (NITT), 112–120 (KHGNRSVSS), and Ser-124. Anthranilate is bound at residue Gly-84. Thr-96 lines the Mg(2+) pocket. Asn-115 serves as a coordination point for anthranilate. Residue Arg-170 participates in anthranilate binding. 2 residues coordinate Mg(2+): Asp-228 and Glu-229.

Belongs to the anthranilate phosphoribosyltransferase family. Homodimer. Requires Mg(2+) as cofactor.

It carries out the reaction N-(5-phospho-beta-D-ribosyl)anthranilate + diphosphate = 5-phospho-alpha-D-ribose 1-diphosphate + anthranilate. Its pathway is amino-acid biosynthesis; L-tryptophan biosynthesis; L-tryptophan from chorismate: step 2/5. Its function is as follows. Catalyzes the transfer of the phosphoribosyl group of 5-phosphorylribose-1-pyrophosphate (PRPP) to anthranilate to yield N-(5'-phosphoribosyl)-anthranilate (PRA). The sequence is that of Anthranilate phosphoribosyltransferase from Corynebacterium glutamicum (strain R).